Consider the following 195-residue polypeptide: Magnetosome membrane protein 22 (195 aa).

The span at 1 to 28 (MAAQTAASEAPAPAAAPADSPTTAGPTP) shows a compositional bias: low complexity. A disordered region spans residues 1–31 (MAAQTAASEAPAPAAAPADSPTTAGPTPDSV). 3 helical membrane passes run 45 to 65 (VLAAVAASIVPVPLFDIAAVV), 90 to 110 (SVIASLAGGVVGYGAGMAVAV), and 115 to 135 (LIPGVGWMLGMVSLPVIAGAT).

It localises to the magnetosome membrane. This is Magnetosome membrane protein 22 from Magnetospirillum gryphiswaldense (strain DSM 6361 / JCM 21280 / NBRC 15271 / MSR-1).